The primary structure comprises 489 residues: MKTLIFFWNLWLWALLVCFWCITLVCVTTNSIDTMASLLVMCILFVSAINKYTQAISSNNPKWPSSWHLGIIACIVLKLWNLSTTNSVTYACLITTAILSLVTAFLTLIKHCTACKLQLEHGILFTSTFAVLMTNMLVHMSNTWQSSWIFFPISFTLSLPFLYAFATVKTGNIKLVSSVSFICAGLVMGYPVSCCKTHTCTATAAGLSLSSIYLGFTGIISTLHKSWAPPKRGILTFLLLQGGVLTTQTLTTELLAITSTTGNIKGHEILLLVCLIFLWCLYVWQSFNKASLVTGMLHLIAAWSHTGGCVQLVMLLPSGLTRGILTMIICISTLFSTLQGLLVFYLYKEKKVVAVNSYRQRRRRIYTRDQNLHHNDNHLGNNVISPPPLPPFFRQPVRLPSHVTDRGRGSQLLNEVELQEVNRDPPNVFGYASILVSGAEESREPSPQPDQSGMSILRVDGGSAFRIDTAQAATQPTDDLYEEVLFPRN.

An N-terminal signal peptide occupies residues 1 to 26 (MKTLIFFWNLWLWALLVCFWCITLVC). 11 consecutive transmembrane segments (helical) span residues 29-49 (TNSIDTMASLLVMCILFVSAI), 63-83 (WPSSWHLGIIACIVLKLWNLS), 89-109 (TYACLITTAILSLVTAFLTLI), 121-141 (HGILFTSTFAVLMTNMLVHMS), 148-168 (WIFFPISFTLSLPFLYAFATV), 175-195 (LVSSVSFICAGLVMGYPVSCC), 200-220 (CTATAAGLSLSSIYLGFTGII), 237-257 (FLLLQGGVLTTQTLTTELLAI), 264-284 (IKGHEILLLVCLIFLWCLYVW), 296-316 (MLHLIAAWSHTGGCVQLVMLL), and 324-344 (ILTMIICISTLFSTLQGLLVF).

As to quaternary structure, interacts with host LYN; this interaction modulates B-cells signaling. Interacts with host ITSN2.

It localises to the host cell membrane. The protein localises to the host Golgi apparatus. It is found in the host trans-Golgi network. Plays a crucial role for reactivation of the virus from latency, early viral gene expression and virus production. Modulates host signaling pathways including activation of MAP kinases c-JUN-N-terminal kinase (JNK), ERK2, and NF-kappa-B resulting in the activation of AP-1 and NFAT-dependent gene expression in B-lymphocytes. When expressed in epithelial cells, induces the expression of several inflammatory and angiogenic genes. Also interferes with B-lymphocytes signaling through interaction with host LYN kinase. The sequence is that of Protein K15 (K15) from Human herpesvirus 8 type P (isolate GK18) (HHV-8).